The sequence spans 203 residues: Large ribosomal subunit protein bL25 (203 aa).

The protein belongs to the bacterial ribosomal protein bL25 family. CTC subfamily. In terms of assembly, part of the 50S ribosomal subunit; part of the 5S rRNA/L5/L18/L25 subcomplex. Contacts the 5S rRNA. Binds to the 5S rRNA independently of L5 and L18.

In terms of biological role, this is one of the proteins that binds to the 5S RNA in the ribosome where it forms part of the central protuberance. The protein is Large ribosomal subunit protein bL25 of Rickettsia africae (strain ESF-5).